A 1218-amino-acid chain; its full sequence is Formin-A (1218 aa).

The C2 domain maps to methionine 1–valine 108. The GBD/FH3 domain occupies glutamate 139–glycine 539. A coiled-coil region spans residues leucine 563–lysine 638. The tract at residues glutamine 634–valine 762 is disordered. Positions alanine 649 to glycine 747 are enriched in pro residues. An FH1 domain is found at proline 652–proline 737. The region spanning arginine 759–leucine 1155 is the FH2 domain. Residues serine 1034–serine 1061 are a coiled coil. Disordered regions lie at residues lysine 1153–valine 1179 and lysine 1198–leucine 1218. Positions glycine 1174 to glutamine 1209 constitute a DAD domain.

Belongs to the formin homology family. Diaphanous subfamily. Interacts (via GBD/FH3 domain) with activated Rho-GTPases.

Formins play an important role in the nucleation of actin and the formation of linear actin filaments. The chain is Formin-A (forA) from Dictyostelium discoideum (Social amoeba).